The sequence spans 240 residues: Coatomer subunit delta (240 aa).

Positions 215–226 (AAAKASSAPKAK) are enriched in low complexity. A disordered region spans residues 215–240 (AAAKASSAPKAKGMQLGKKKNTSLLY). Residues 231 to 240 (GKKKNTSLLY) are compositionally biased toward basic residues.

This sequence belongs to the adaptor complexes medium subunit family. Delta-COP subfamily. In terms of assembly, oligomeric complex that consists of at least the alpha, beta, beta', gamma, delta, epsilon and zeta subunits.

It localises to the cytoplasm. The protein localises to the nucleus. In terms of biological role, the coatomer is a cytosolic protein complex that binds to dilysine motifs and reversibly associates with Golgi non-clathrin-coated vesicles, which further mediate biosynthetic protein transport from the ER, via the Golgi up to the trans Golgi network. Coatomer complex is required for budding from Golgi membranes, and is essential for the retrograde Golgi-to-ER transport of dilysine-tagged proteins. The chain is Coatomer subunit delta (ret2) from Schizosaccharomyces pombe (strain 972 / ATCC 24843) (Fission yeast).